Consider the following 287-residue polypeptide: Bifunctional protein FolD (287 aa).

NADP(+)-binding positions include 166–168 (GAS) and isoleucine 232.

It belongs to the tetrahydrofolate dehydrogenase/cyclohydrolase family. In terms of assembly, homodimer.

It catalyses the reaction (6R)-5,10-methylene-5,6,7,8-tetrahydrofolate + NADP(+) = (6R)-5,10-methenyltetrahydrofolate + NADPH. It carries out the reaction (6R)-5,10-methenyltetrahydrofolate + H2O = (6R)-10-formyltetrahydrofolate + H(+). The protein operates within one-carbon metabolism; tetrahydrofolate interconversion. Its function is as follows. Catalyzes the oxidation of 5,10-methylenetetrahydrofolate to 5,10-methenyltetrahydrofolate and then the hydrolysis of 5,10-methenyltetrahydrofolate to 10-formyltetrahydrofolate. In Chromohalobacter salexigens (strain ATCC BAA-138 / DSM 3043 / CIP 106854 / NCIMB 13768 / 1H11), this protein is Bifunctional protein FolD.